The chain runs to 226 residues: Respiratory nitrate reductase 2 gamma chain (226 aa).

Topologically, residues 1–4 are periplasmic; the sequence is MIQY. Residues 5–30 form a helical membrane-spanning segment; the sequence is LNVFFYDIYPYICATVFFLGSWLRYD. Residues 31 to 48 lie on the Cytoplasmic side of the membrane; that stretch reads YGQYTWRASSSQMLDKRG. A helical membrane pass occupies residues 49–71; the sequence is MVIWSNLFHIGILGIFFGHLFGM. Positions 57 and 67 each coordinate heme b. Topologically, residues 72 to 83 are periplasmic; it reads LTPHWMYAWFLP. A helical transmembrane segment spans residues 84–113; sequence VAAKQLMAMVLGGICGVLTLIGGAGLLWRR. Residues 114-125 are Cytoplasmic-facing; that stretch reads LTNQRVRATSTT. A helical transmembrane segment spans residues 126–149; that stretch reads PDIIIMSILLIQCLLGLSTIPFSA. The Periplasmic segment spans residues 150–183; that stretch reads QYPDGSEMMKLVGWAQSIVTFRGGSSEMLNGVAF. The chain crosses the membrane as a helical span at residues 184 to 199; that stretch reads VFRLHLVLGMTIFLLF. Positions 188 and 206 each coordinate heme b. Residues 200-226 are Cytoplasmic-facing; it reads PFTRLVHVWSAPFEYFTRRYQIVRSRR.

In terms of assembly, dimer of heterotrimers each composed of an alpha, a beta and a gamma chain. Alpha and beta are catalytic chains; gamma chains are involved in binding the enzyme complex to the cytoplasmic membrane. Heme serves as cofactor.

Its subcellular location is the cell inner membrane. The enzyme catalyses nitrate + a quinol = a quinone + nitrite + H2O. This is a second nitrate reductase enzyme which can substitute for the NRA enzyme and allows E.coli to use nitrate as an electron acceptor during anaerobic growth. The gamma chain is a membrane-embedded heme-iron unit resembling cytochrome b, which transfers electrons from quinones to the beta subunit. The protein is Respiratory nitrate reductase 2 gamma chain (narV) of Escherichia coli (strain K12).